Here is a 211-residue protein sequence, read N- to C-terminus: Probable nicotinate-nucleotide adenylyltransferase (211 aa).

The protein belongs to the NadD family.

The catalysed reaction is nicotinate beta-D-ribonucleotide + ATP + H(+) = deamido-NAD(+) + diphosphate. It functions in the pathway cofactor biosynthesis; NAD(+) biosynthesis; deamido-NAD(+) from nicotinate D-ribonucleotide: step 1/1. Catalyzes the reversible adenylation of nicotinate mononucleotide (NaMN) to nicotinic acid adenine dinucleotide (NaAD). In Legionella pneumophila (strain Lens), this protein is Probable nicotinate-nucleotide adenylyltransferase.